The following is a 399-amino-acid chain: Argininosuccinate synthase (399 aa).

8-16 is an ATP binding site; sequence AYSGGLDTS. L-citrulline is bound at residue Tyr-87. Gly-117 is a binding site for ATP. Positions 119, 123, and 124 each coordinate L-aspartate. An L-citrulline-binding site is contributed by Asn-123. Arg-127, Ser-175, Glu-260, and Tyr-272 together coordinate L-citrulline.

This sequence belongs to the argininosuccinate synthase family. Type 1 subfamily. Homotetramer.

It is found in the cytoplasm. It carries out the reaction L-citrulline + L-aspartate + ATP = 2-(N(omega)-L-arginino)succinate + AMP + diphosphate + H(+). It functions in the pathway amino-acid biosynthesis; L-arginine biosynthesis; L-arginine from L-ornithine and carbamoyl phosphate: step 2/3. The chain is Argininosuccinate synthase from Mycolicibacterium smegmatis (strain ATCC 700084 / mc(2)155) (Mycobacterium smegmatis).